A 392-amino-acid polypeptide reads, in one-letter code: GTPase Obg (392 aa).

Positions 1-159 constitute an Obg domain; that stretch reads MKFIDEALIR…RDLQLELMLL (159 aa). Positions 160–333 constitute an OBG-type G domain; it reads ADVGMLGLPN…LCRDIMDFIE (174 aa). GTP is bound by residues 166–173, 191–195, 213–216, 283–286, and 314–316; these read GLPNAGKS, FTTLV, DIPG, NKID, and SAA. Mg(2+) contacts are provided by serine 173 and threonine 193. Residues 362 to 392 are disordered; that stretch reads EQVFTEDDQEGDDWDDWSEDDEEGVEIIYKP. Residues 365–386 show a composition bias toward acidic residues; the sequence is FTEDDQEGDDWDDWSEDDEEGV.

This sequence belongs to the TRAFAC class OBG-HflX-like GTPase superfamily. OBG GTPase family. In terms of assembly, monomer. The cofactor is Mg(2+).

Its subcellular location is the cytoplasm. An essential GTPase which binds GTP, GDP and possibly (p)ppGpp with moderate affinity, with high nucleotide exchange rates and a fairly low GTP hydrolysis rate. Plays a role in control of the cell cycle, stress response, ribosome biogenesis and in those bacteria that undergo differentiation, in morphogenesis control. The protein is GTPase Obg of Histophilus somni (strain 129Pt) (Haemophilus somnus).